Here is a 667-residue protein sequence, read N- to C-terminus: MADLSSRVNELHDLLNQYSYEYYVEDNPSVPDSEYDKLLHELIKIEEEHPEYKTVDSPTVRVGGEAQASFNKVNHDTPMLSLGNAFNEDDLRKFDQRIREQIGNVEYMCELKIDGLAVSLKYVDGYFVQGLTRGDGTTGEDITENLKTIHAIPLKMKEPLNVEVRGEAYMPRRSFLRLNEEKEKNDEQLFANPRNAAAGSLRQLDSKLTAKRKLSVFIYSVNDFTDFNARSQSEALDELNKLGFTTNKNRARVNNIDGVLEYIEKWTSQRESLPYDIDGIVIKVNDLDQQDEMGFTQKSPRWAIAYKFPAEEVVTKLLDIELSIGRTGVVTPTAILEPVKVAGTTVSRASLHNEDLIHDRDIRIGDSVVVKKAGDIIPEVVRSIPERRPEDAVTYHMPTHCPSCGHELVRIEGEVALRCINPKCQAQLVEGLIHFVSRQAMNIDGLGTKIIQQLYQSELIKDVADIFYLTEEDLLPLDRMGQKKVDNLLAAIQQAKDNSLENLLFGLGIRHLGVKASQVLAEKYETIDRLLTVTEAELVEIHDIGDKVAQSVVTYLENEDIRALIQKLKDKHVNMIYKGIKTSDIEGHPEFSGKTIVLTGKLHQMTRNEASKWLASQGAKVTSSVTKNTDVVIAGEDAGSKLTKAQSLGIEIWTEQQFVDKQNELNS.

NAD(+) is bound by residues 32-36 (DSEYD), 81-82 (SL), and glutamate 110. Catalysis depends on lysine 112, which acts as the N6-AMP-lysine intermediate. Residues arginine 133, glutamate 167, lysine 283, and lysine 307 each coordinate NAD(+). Zn(2+) is bound by residues cysteine 401, cysteine 404, cysteine 419, and cysteine 424. Residues 586–667 (EGHPEFSGKT…FVDKQNELNS (82 aa)) enclose the BRCT domain.

It belongs to the NAD-dependent DNA ligase family. LigA subfamily. Requires Mg(2+) as cofactor. Mn(2+) is required as a cofactor.

The catalysed reaction is NAD(+) + (deoxyribonucleotide)n-3'-hydroxyl + 5'-phospho-(deoxyribonucleotide)m = (deoxyribonucleotide)n+m + AMP + beta-nicotinamide D-nucleotide.. Functionally, DNA ligase that catalyzes the formation of phosphodiester linkages between 5'-phosphoryl and 3'-hydroxyl groups in double-stranded DNA using NAD as a coenzyme and as the energy source for the reaction. It is essential for DNA replication and repair of damaged DNA. The protein is DNA ligase of Staphylococcus aureus (strain COL).